The chain runs to 896 residues: Translation initiation factor IF-2 (896 aa).

Over residues 93–219 (VKRDPQEAER…RMAEENEKNW (127 aa)) the composition is skewed to basic and acidic residues. The interval 93 to 307 (VKRDPQEAER…GSALQQGFQK (215 aa)) is disordered. Residues 256–271 (GRSRSSKAARPAKKGN) are compositionally biased toward basic residues. Over residues 272-285 (KHAESKADREEARA) the composition is skewed to basic and acidic residues. One can recognise a tr-type G domain in the interval 395-564 (PRAPVVTIMG…LLQAEVLELK (170 aa)). Residues 404–411 (GHVDHGKT) are G1. Residue 404 to 411 (GHVDHGKT) participates in GTP binding. The segment at 429–433 (GITQH) is G2. The tract at residues 450-453 (DTPG) is G3. GTP contacts are provided by residues 450–454 (DTPGH) and 504–507 (NKID). The interval 504 to 507 (NKID) is G4. Residues 540-542 (SAK) are G5.

Belongs to the TRAFAC class translation factor GTPase superfamily. Classic translation factor GTPase family. IF-2 subfamily.

It is found in the cytoplasm. In terms of biological role, one of the essential components for the initiation of protein synthesis. Protects formylmethionyl-tRNA from spontaneous hydrolysis and promotes its binding to the 30S ribosomal subunits. Also involved in the hydrolysis of GTP during the formation of the 70S ribosomal complex. The polypeptide is Translation initiation factor IF-2 (Klebsiella pneumoniae subsp. pneumoniae (strain ATCC 700721 / MGH 78578)).